Reading from the N-terminus, the 236-residue chain is MNHEAPLLEVGFLTFNKSTVMMLLVAAIIVFLIAFISTRSLKLKPTGMQNFMEWIMDFVKNIIKSNMDWKTGGRFHILGITLIMFIAVSNLLGLPFSIVYGHELWWKSPTADPTVTMTLATMILVLSHFYGVKMKGTGHYAGTFFKPMSFMFPLKLVEEFANTLTLGLRLYGNIYAGEILLGLLAGLASSGAVGFIGAIVPMMAWQGFSIFIGFIQAFIFTMLTMVYMAHKVSDDH.

The next 5 helical transmembrane spans lie at 18 to 38 (STVM…FIST), 79 to 99 (GITL…FSIV), 112 to 132 (DPTV…FYGV), 174 to 194 (IYAG…GAVG), and 205 to 227 (WQGF…TMVY).

It belongs to the ATPase A chain family. F-type ATPases have 2 components, CF(1) - the catalytic core - and CF(0) - the membrane proton channel. CF(1) has five subunits: alpha(3), beta(3), gamma(1), delta(1), epsilon(1). CF(0) has three main subunits: a(1), b(2) and c(9-12). The alpha and beta chains form an alternating ring which encloses part of the gamma chain. CF(1) is attached to CF(0) by a central stalk formed by the gamma and epsilon chains, while a peripheral stalk is formed by the delta and b chains.

It localises to the cell membrane. Key component of the proton channel; it plays a direct role in the translocation of protons across the membrane. This Lysinibacillus sphaericus (strain C3-41) protein is ATP synthase subunit a.